The following is a 575-amino-acid chain: V-type ATP synthase alpha chain (575 aa).

Position 238–245 (glycine 238–threonine 245) interacts with ATP.

The protein belongs to the ATPase alpha/beta chains family.

It catalyses the reaction ATP + H2O + 4 H(+)(in) = ADP + phosphate + 5 H(+)(out). In terms of biological role, produces ATP from ADP in the presence of a proton gradient across the membrane. The V-type alpha chain is a catalytic subunit. This chain is V-type ATP synthase alpha chain, found in Borrelia garinii subsp. bavariensis (strain ATCC BAA-2496 / DSM 23469 / PBi) (Borreliella bavariensis).